The sequence spans 445 residues: Phosphoglucosamine mutase (445 aa).

The Phosphoserine intermediate role is filled by Ser102. Positions 102, 240, 242, and 244 each coordinate Mg(2+). Position 102 is a phosphoserine (Ser102).

This sequence belongs to the phosphohexose mutase family. It depends on Mg(2+) as a cofactor. Activated by phosphorylation.

The enzyme catalyses alpha-D-glucosamine 1-phosphate = D-glucosamine 6-phosphate. Its function is as follows. Catalyzes the conversion of glucosamine-6-phosphate to glucosamine-1-phosphate. The sequence is that of Phosphoglucosamine mutase from Mycolicibacterium vanbaalenii (strain DSM 7251 / JCM 13017 / BCRC 16820 / KCTC 9966 / NRRL B-24157 / PYR-1) (Mycobacterium vanbaalenii).